The following is a 243-amino-acid chain: MAVQISKKRKFVADGIFKAELNEFLTRELAEDGYSGVEVRVTPTRTEIIILATRTQNVLGEKGRRIRELTAVVQKRFGFPEGSVELYAEKVATRGLCAIAQAESLRYKLLGGLAVRRACYGVLRFIMESGAKGCEVVVSGKLRGQRAKSMKFVDGLMIHSGDPVNYYVDTAVRHVLLRQGVLGIKVKIMLPWDPTGKIGPKKPLPDHVSIVEPKDEILPTTPISEQKGGKPEPPAMPQPVPTA.

The residue at position 2 (alanine 2) is an N-acetylalanine. Serine 6 is subject to Phosphoserine; by PKC/PRKCD. The 72-residue stretch at 21–92 (LNEFLTRELA…SVELYAEKVA (72 aa)) folds into the KH type-2 domain. At serine 35 the chain carries Phosphoserine. Threonine 42 carries the phosphothreonine; by MAPK modification. N6-acetyllysine is present on lysine 62. Asymmetric dimethylarginine; by PRMT1 is present on residues arginine 64, arginine 65, and arginine 67. Position 70 is a phosphothreonine; by PKB (threonine 70). Lysine 90 participates in a covalent cross-link: Glycyl lysine isopeptide (Lys-Gly) (interchain with G-Cter in ubiquitin). Serine 104 carries the phosphoserine modification. At lysine 132 the chain carries N6-succinyllysine. Residue lysine 202 forms a Glycyl lysine isopeptide (Lys-Gly) (interchain with G-Cter in ubiquitin) linkage. Serine 209 bears the Phosphoserine; by IKKB mark. Lysine 214 is covalently cross-linked (Glycyl lysine isopeptide (Lys-Gly) (interchain with G-Cter in SUMO2); alternate). Lysine 214 is covalently cross-linked (Glycyl lysine isopeptide (Lys-Gly) (interchain with G-Cter in ubiquitin); alternate). The segment at 214-243 (KDEILPTTPISEQKGGKPEPPAMPQPVPTA) is disordered. Phosphothreonine is present on threonine 220. Threonine 221 is subject to Phosphothreonine; by CDK1 and PKC/PRKCD. Residue serine 224 is modified to Phosphoserine. Residue lysine 230 forms a Glycyl lysine isopeptide (Lys-Gly) (interchain with G-Cter in SUMO2) linkage. The segment covering 231 to 243 (PEPPAMPQPVPTA) has biased composition (pro residues). Residue threonine 242 is modified to Phosphothreonine.

Belongs to the universal ribosomal protein uS3 family. In terms of assembly, component of the 40S small ribosomal subunit. Identified in a IGF2BP1-dependent mRNP granule complex containing untranslated mRNAs. Interacts with HNRPD. Interacts with PRMT1; the interaction methylates RPS3. Interacts with SUMO1; the interaction sumoylates RPS3. Interacts with UBC9. Interacts with CDK1; the interaction phosphorylates RPS3. Interacts with PRKCD; the interaction phosphorylates RPS3. Interacts with PKB/AKT; the interaction phosphorylates RPS3. Interacts with E2F1; the interaction occurs in the absence of nerve growth factor and increases transcription of pro-apoptotic proteins BCL2L11/BIM and HRK/Dp5. Interacts with the base excision repair proteins APEX1 and OGG1; interaction with OGG1 increases OGG1 N-glycosylase activity. Interacts with UNG; the interaction increases the uracil excision activity of UNG1. Interacts with HSP90; the interaction prevents the ubiquitination and proteasome-dependent degradation of RPS3 and is suppressed by increased ROS levels. Interacts with TOM70; the interaction promotes translocation of RPS3 to the mitochondrion. Interacts (via N-terminus) with RELA (via N-terminus); the interaction enhances the DNA-binding activity of the NF-kappa-B p65-p50 complex. Interacts with NFKBIA; the interaction is direct and may bridge the interaction between RPS3 and RELA. Interacts with IKKB; the interaction phosphorylates RPS3 and enhances its translocation to the nucleus. Interacts (via KH domain) with MDM2 and TP53. Interacts with TRADD. Interacts with CRY1. Post-translationally, methylation by PRMT1 is required for import into the nucleolus and for ribosome assembly. Sumoylation by SUMO1 enhances protein stability through increased resistance to proteolysis. Sumoylation occurs at one or more of the three consensus sites, Lys-18, Lys-214 and Lys-230. In terms of processing, phosphorylation at Thr-221 by CDK1 occurs mainly in G2/M phase. Phosphorylation by PRKCD occurs on a non-ribosomal-associated form which results in translocation of RPS3 to the nucleus and enhances its endonuclease activity. Phosphorylated on Ser-209 by IKKB in response to activation of the NF-kappa-B p65-p50 complex which enhances the association of RPS3 with importin-alpha and mediates the nuclear translocation of RPS3. Phosphorylation by MAPK is required for translocation to the nucleus following exposure of cells to DNA damaging agents such as hydrogen peroxide. Phosphorylation by PKB/AKT mediates RPS3 nuclear translocation, enhances RPS3 endonuclease activity and suppresses RPS3-induced neuronal apoptosis. Post-translationally, ubiquitinated; ubiquitination is prevented by interaction with HSP90 which stabilizes the protein. Monoubiquitinated at Lys-214 by RNF10 and ZNF598 when a ribosome has stalled during translation of poly(A) sequences, leading to preclude synthesis of a long poly-lysine tail and initiate the ribosome quality control (RQC) pathway to degrade the potentially detrimental aberrant nascent polypeptide. Deubiquitinated at Lys-214 by USP10, preventing degradation by the proteasome and promoting 40S ribosome subunit recycling following ribosome dissociation. Ufmylated by UFL1.

It is found in the cytoplasm. The protein localises to the nucleus. Its subcellular location is the nucleolus. The protein resides in the mitochondrion inner membrane. It localises to the cytoskeleton. It is found in the spindle. The enzyme catalyses 2'-deoxyribonucleotide-(2'-deoxyribose 5'-phosphate)-2'-deoxyribonucleotide-DNA = a 3'-end 2'-deoxyribonucleotide-(2,3-dehydro-2,3-deoxyribose 5'-phosphate)-DNA + a 5'-end 5'-phospho-2'-deoxyribonucleoside-DNA + H(+). Component of the small ribosomal subunit. The ribosome is a large ribonucleoprotein complex responsible for the synthesis of proteins in the cell. Has endonuclease activity and plays a role in repair of damaged DNA. Cleaves phosphodiester bonds of DNAs containing altered bases with broad specificity and cleaves supercoiled DNA more efficiently than relaxed DNA. Displays high binding affinity for 7,8-dihydro-8-oxoguanine (8-oxoG), a common DNA lesion caused by reactive oxygen species (ROS). Has also been shown to bind with similar affinity to intact and damaged DNA. Stimulates the N-glycosylase activity of the base excision protein OGG1. Enhances the uracil excision activity of UNG1. Also stimulates the cleavage of the phosphodiester backbone by APEX1. When located in the mitochondrion, reduces cellular ROS levels and mitochondrial DNA damage. Has also been shown to negatively regulate DNA repair in cells exposed to hydrogen peroxide. Plays a role in regulating transcription as part of the NF-kappa-B p65-p50 complex where it binds to the RELA/p65 subunit, enhances binding of the complex to DNA and promotes transcription of target genes. Represses its own translation by binding to its cognate mRNA. Binds to and protects TP53/p53 from MDM2-mediated ubiquitination. Involved in spindle formation and chromosome movement during mitosis by regulating microtubule polymerization. Involved in induction of apoptosis through its role in activation of CASP8. Induces neuronal apoptosis by interacting with the E2F1 transcription factor and acting synergistically with it to up-regulate pro-apoptotic proteins BCL2L11/BIM and HRK/Dp5. Interacts with TRADD following exposure to UV radiation and induces apoptosis by caspase-dependent JNK activation. The protein is Small ribosomal subunit protein uS3 (RPS3) of Bos taurus (Bovine).